The chain runs to 196 residues: uncharacterized protein (196 aa).

This sequence to H.influenzae HI_0431.

This is an uncharacterized protein from Salmonella typhi.